Reading from the N-terminus, the 833-residue chain is Leucine--tRNA ligase (833 aa).

A 'HIGH' region motif is present at residues 41-52 (PYPSGAGLHVGH). A 'KMSKS' region motif is present at residues 610–614 (KMSKS). Lys-613 contributes to the ATP binding site.

Belongs to the class-I aminoacyl-tRNA synthetase family.

Its subcellular location is the cytoplasm. The catalysed reaction is tRNA(Leu) + L-leucine + ATP = L-leucyl-tRNA(Leu) + AMP + diphosphate. The protein is Leucine--tRNA ligase of Streptococcus pyogenes serotype M1.